The sequence spans 239 residues: Orotidine 5'-phosphate decarboxylase (239 aa).

Substrate-binding positions include aspartate 10, lysine 32, 59 to 68, threonine 122, arginine 184, glutamine 193, glycine 213, and arginine 214; that span reads DLKLHDIPNT. Lysine 61 functions as the Proton donor in the catalytic mechanism.

It belongs to the OMP decarboxylase family. Type 1 subfamily. As to quaternary structure, homodimer.

It carries out the reaction orotidine 5'-phosphate + H(+) = UMP + CO2. The protein operates within pyrimidine metabolism; UMP biosynthesis via de novo pathway; UMP from orotate: step 2/2. Catalyzes the decarboxylation of orotidine 5'-monophosphate (OMP) to uridine 5'-monophosphate (UMP). The polypeptide is Orotidine 5'-phosphate decarboxylase (Geobacillus thermodenitrificans (strain NG80-2)).